The following is a 364-amino-acid chain: Methylthioribose-1-phosphate isomerase (364 aa).

Residue D246 is the Proton donor of the active site.

The protein belongs to the eIF-2B alpha/beta/delta subunits family. MtnA subfamily.

It is found in the cytoplasm. The protein localises to the nucleus. The enzyme catalyses 5-(methylsulfanyl)-alpha-D-ribose 1-phosphate = 5-(methylsulfanyl)-D-ribulose 1-phosphate. Its pathway is amino-acid biosynthesis; L-methionine biosynthesis via salvage pathway; L-methionine from S-methyl-5-thio-alpha-D-ribose 1-phosphate: step 1/6. Catalyzes the interconversion of methylthioribose-1-phosphate (MTR-1-P) into methylthioribulose-1-phosphate (MTRu-1-P). This chain is Methylthioribose-1-phosphate isomerase, found in Bombyx mori (Silk moth).